The sequence spans 705 residues: Polyribonucleotide nucleotidyltransferase (705 aa).

The Mg(2+) site is built by D486 and D492. The KH domain maps to 553–612; the sequence is PRIHTIRINPDKIKDVIGKGGSVIRALTEETGTTIEIEDDGTVKIAATDGEKAKFAIRRI. Residues 622–690 enclose the S1 motif domain; the sequence is GRIYQGKVTR…RQGRVRLSIK (69 aa).

It belongs to the polyribonucleotide nucleotidyltransferase family. In terms of assembly, component of the RNA degradosome, which is a multiprotein complex involved in RNA processing and mRNA degradation. Mg(2+) serves as cofactor.

It localises to the cytoplasm. The catalysed reaction is RNA(n+1) + phosphate = RNA(n) + a ribonucleoside 5'-diphosphate. Involved in mRNA degradation. Catalyzes the phosphorolysis of single-stranded polyribonucleotides processively in the 3'- to 5'-direction. The chain is Polyribonucleotide nucleotidyltransferase from Serratia proteamaculans (strain 568).